We begin with the raw amino-acid sequence, 316 residues long: Ornithine carbamoyltransferase (316 aa).

Carbamoyl phosphate contacts are provided by residues 57-60 (STRT), Gln84, Arg108, and 135-138 (HPCQ). Residues Asn166, Asp230, and 234-235 (SM) each bind L-ornithine. Carbamoyl phosphate contacts are provided by residues 269–270 (CL) and Arg297.

The protein belongs to the aspartate/ornithine carbamoyltransferase superfamily. OTCase family.

Its subcellular location is the cytoplasm. It carries out the reaction carbamoyl phosphate + L-ornithine = L-citrulline + phosphate + H(+). It participates in amino-acid degradation; L-arginine degradation via ADI pathway; carbamoyl phosphate from L-arginine: step 2/2. Functionally, reversibly catalyzes the transfer of the carbamoyl group from carbamoyl phosphate (CP) to the N(epsilon) atom of ornithine (ORN) to produce L-citrulline. The chain is Ornithine carbamoyltransferase from Bacillus cereus (strain AH187).